Here is a 359-residue protein sequence, read N- to C-terminus: Type-1 angiotensin II receptor (359 aa).

Residues 1–25 (MILNSSTEDGIKRIQDDCPKAGRHN) are Extracellular-facing. N-linked (GlcNAc...) asparagine glycosylation is present at N4. Positions 15 and 17 each coordinate angiotensin II. 2 disulfide bridges follow: C18–C274 and C101–C180. The helical transmembrane segment at 26-55 (YIFIMIPTLYSIIFVVGLFGNSLVVIVIYF) threads the bilayer. Residues 56 to 61 (YMKLKT) lie on the Cytoplasmic side of the membrane. The helical transmembrane segment at 62-89 (VASVFLLNLALADLCFLLTLPLWAVYTA) threads the bilayer. At 90 to 98 (MEYRWPFGN) the chain is on the extracellular side. Residues 99–125 (YLCKIASGSVSFNLYASVFLLTCLSID) form a helical membrane-spanning segment. Residues 126-141 (RYLAIVHPMKSRLRRT) lie on the Cytoplasmic side of the membrane. Residues 142-165 (MLVAKVTCIIIWLLAGLASLPTII) traverse the membrane as a helical segment. Topologically, residues 166-190 (HRNVFFIENTNITVCAFHYESQNST) are extracellular. R167 is a binding site for angiotensin II. An N-linked (GlcNAc...) asparagine glycan is attached at N176. F182, H183, and Y184 together coordinate angiotensin II. N188 carries N-linked (GlcNAc...) asparagine glycosylation. The helical transmembrane segment at 191-216 (LPVGLGLTKNILGFLFPFLIILTSYT) threads the bilayer. K199 contributes to the angiotensin II binding site. Over 217–239 (LIWKTLKKAYEIQKNKPRKDDIF) the chain is Cytoplasmic. Residues 240–268 (KIILAIVLFFFFSWVPHQIFTFMDVLIQL) form a helical membrane-spanning segment. Residues 269-278 (GLIRDCKIED) are Extracellular-facing. The helical transmembrane segment at 279-304 (IVDTAMPITICLAYFNNCLNPPFYGF) threads the bilayer. The Cytoplasmic segment spans residues 305-359 (LGKKFKKYFLQLLKYIPPKAKSHSNLSTKMSTLSYRPSENGNSSTKKPAPCTEVE). Polar residues predominate over residues 335–350 (STLSYRPSENGNSSTK). A disordered region spans residues 335 to 359 (STLSYRPSENGNSSTKKPAPCTEVE). A lipid anchor (S-palmitoyl cysteine) is attached at C355.

It belongs to the G-protein coupled receptor 1 family. In terms of assembly, interacts with MAS1. Interacts with ARRB1. Interacts with FLNA (via filamin repeat 21); increases PKA-mediated phosphorylation of FLNA. C-terminal Ser or Thr residues may be phosphorylated.

The protein resides in the cell membrane. Its function is as follows. Receptor for angiotensin II, a vasoconstricting peptide, which acts as a key regulator of blood pressure and sodium retention by the kidney. The activated receptor in turn couples to G-alpha proteins G(q) (GNAQ, GNA11, GNA14 or GNA15) and thus activates phospholipase C and increases the cytosolic Ca(2+) concentrations, which in turn triggers cellular responses such as stimulation of protein kinase C. The sequence is that of Type-1 angiotensin II receptor (AGTR1) from Ovis aries (Sheep).